Reading from the N-terminus, the 309-residue chain is Methionyl-tRNA formyltransferase (309 aa).

109 to 112 (SLLP) is a (6S)-5,6,7,8-tetrahydrofolate binding site.

The protein belongs to the Fmt family.

It carries out the reaction L-methionyl-tRNA(fMet) + (6R)-10-formyltetrahydrofolate = N-formyl-L-methionyl-tRNA(fMet) + (6S)-5,6,7,8-tetrahydrofolate + H(+). Attaches a formyl group to the free amino group of methionyl-tRNA(fMet). The formyl group appears to play a dual role in the initiator identity of N-formylmethionyl-tRNA by promoting its recognition by IF2 and preventing the misappropriation of this tRNA by the elongation apparatus. The polypeptide is Methionyl-tRNA formyltransferase (Chloroflexus aggregans (strain MD-66 / DSM 9485)).